Here is a 233-residue protein sequence, read N- to C-terminus: Large ribosomal subunit protein uL1 (233 aa).

It belongs to the universal ribosomal protein uL1 family. In terms of assembly, part of the 50S ribosomal subunit.

Its function is as follows. Binds directly to 23S rRNA. The L1 stalk is quite mobile in the ribosome, and is involved in E site tRNA release. Functionally, protein L1 is also a translational repressor protein, it controls the translation of the L11 operon by binding to its mRNA. The polypeptide is Large ribosomal subunit protein uL1 (Aeromonas hydrophila subsp. hydrophila (strain ATCC 7966 / DSM 30187 / BCRC 13018 / CCUG 14551 / JCM 1027 / KCTC 2358 / NCIMB 9240 / NCTC 8049)).